The sequence spans 162 residues: Endoribonuclease YbeY (162 aa).

Positions 128, 132, and 138 each coordinate Zn(2+).

The protein belongs to the endoribonuclease YbeY family. The cofactor is Zn(2+).

It localises to the cytoplasm. Single strand-specific metallo-endoribonuclease involved in late-stage 70S ribosome quality control and in maturation of the 3' terminus of the 16S rRNA. This Lactococcus lactis subsp. lactis (strain IL1403) (Streptococcus lactis) protein is Endoribonuclease YbeY.